Consider the following 206-residue polypeptide: Pyridoxine/pyridoxamine 5'-phosphate oxidase (206 aa).

Residues 49 to 54, 69 to 70, Lys76, and Gln98 contribute to the FMN site; these read RMVLLK and YT. Residue Lys54 participates in substrate binding. Substrate is bound by residues Tyr116, Arg120, and Ser124. FMN is bound by residues 133–134 and Trp177; that span reads QS. 183-185 provides a ligand contact to substrate; the sequence is RLH. Arg187 contacts FMN.

This sequence belongs to the pyridoxamine 5'-phosphate oxidase family. In terms of assembly, homodimer. It depends on FMN as a cofactor.

The catalysed reaction is pyridoxamine 5'-phosphate + O2 + H2O = pyridoxal 5'-phosphate + H2O2 + NH4(+). It catalyses the reaction pyridoxine 5'-phosphate + O2 = pyridoxal 5'-phosphate + H2O2. It participates in cofactor metabolism; pyridoxal 5'-phosphate salvage; pyridoxal 5'-phosphate from pyridoxamine 5'-phosphate: step 1/1. It functions in the pathway cofactor metabolism; pyridoxal 5'-phosphate salvage; pyridoxal 5'-phosphate from pyridoxine 5'-phosphate: step 1/1. In terms of biological role, catalyzes the oxidation of either pyridoxine 5'-phosphate (PNP) or pyridoxamine 5'-phosphate (PMP) into pyridoxal 5'-phosphate (PLP). This Jannaschia sp. (strain CCS1) protein is Pyridoxine/pyridoxamine 5'-phosphate oxidase.